We begin with the raw amino-acid sequence, 383 residues long: Putative glutamate--cysteine ligase 2-2 (383 aa).

It belongs to the glutamate--cysteine ligase type 2 family. YbdK subfamily.

It catalyses the reaction L-cysteine + L-glutamate + ATP = gamma-L-glutamyl-L-cysteine + ADP + phosphate + H(+). In terms of biological role, ATP-dependent carboxylate-amine ligase which exhibits weak glutamate--cysteine ligase activity. The sequence is that of Putative glutamate--cysteine ligase 2-2 from Legionella pneumophila (strain Paris).